The primary structure comprises 212 residues: Kynurenine formamidase (212 aa).

W18 is a binding site for substrate. Zn(2+) contacts are provided by H48, H52, and D54. The active-site Proton donor/acceptor is the H58. Residues H160 and E172 each coordinate Zn(2+).

Belongs to the Cyclase 1 superfamily. KynB family. As to quaternary structure, homodimer. The cofactor is Zn(2+).

It carries out the reaction N-formyl-L-kynurenine + H2O = L-kynurenine + formate + H(+). It participates in amino-acid degradation; L-tryptophan degradation via kynurenine pathway; L-kynurenine from L-tryptophan: step 2/2. Its function is as follows. Catalyzes the hydrolysis of N-formyl-L-kynurenine to L-kynurenine, the second step in the kynurenine pathway of tryptophan degradation. This chain is Kynurenine formamidase, found in Paraburkholderia phytofirmans (strain DSM 17436 / LMG 22146 / PsJN) (Burkholderia phytofirmans).